The sequence spans 393 residues: Bifunctional enzyme IspD/IspF (393 aa).

A 2-C-methyl-D-erythritol 4-phosphate cytidylyltransferase region spans residues 1–234 (MTISQRTAAI…ARLAAQLGDI (234 aa)). The tract at residues 235-393 (RTGTGYDVHA…SATIRLPWSA (159 aa)) is 2-C-methyl-D-erythritol 2,4-cyclodiphosphate synthase. A divalent metal cation contacts are provided by aspartate 241 and histidine 243. Residues 241–243 (DVH) and 267–268 (HS) contribute to the 4-CDP-2-C-methyl-D-erythritol 2-phosphate site. Residue histidine 275 participates in a divalent metal cation binding. 4-CDP-2-C-methyl-D-erythritol 2-phosphate contacts are provided by residues 289-291 (DIG), 365-368 (TTSE), phenylalanine 372, and arginine 375.

This sequence in the N-terminal section; belongs to the IspD/TarI cytidylyltransferase family. IspD subfamily. The protein in the C-terminal section; belongs to the IspF family. It depends on a divalent metal cation as a cofactor.

It carries out the reaction 2-C-methyl-D-erythritol 4-phosphate + CTP + H(+) = 4-CDP-2-C-methyl-D-erythritol + diphosphate. The enzyme catalyses 4-CDP-2-C-methyl-D-erythritol 2-phosphate = 2-C-methyl-D-erythritol 2,4-cyclic diphosphate + CMP. Its pathway is isoprenoid biosynthesis; isopentenyl diphosphate biosynthesis via DXP pathway; isopentenyl diphosphate from 1-deoxy-D-xylulose 5-phosphate: step 2/6. The protein operates within isoprenoid biosynthesis; isopentenyl diphosphate biosynthesis via DXP pathway; isopentenyl diphosphate from 1-deoxy-D-xylulose 5-phosphate: step 4/6. Functionally, bifunctional enzyme that catalyzes the formation of 4-diphosphocytidyl-2-C-methyl-D-erythritol from CTP and 2-C-methyl-D-erythritol 4-phosphate (MEP) (IspD), and catalyzes the conversion of 4-diphosphocytidyl-2-C-methyl-D-erythritol 2-phosphate (CDP-ME2P) to 2-C-methyl-D-erythritol 2,4-cyclodiphosphate (ME-CPP) with a corresponding release of cytidine 5-monophosphate (CMP) (IspF). The sequence is that of Bifunctional enzyme IspD/IspF from Bradyrhizobium sp. (strain BTAi1 / ATCC BAA-1182).